A 320-amino-acid polypeptide reads, in one-letter code: Cytochrome f (320 aa).

Positions 1–35 (MQTRNTFSWIREEITRSISVSLIIYIITWASISSA) are cleaved as a signal peptide. Heme-binding residues include Tyr-36, Cys-56, Cys-59, and His-60. Residues 286-305 (VQGLLFFLGSVVLAQIFLVL) form a helical membrane-spanning segment.

Belongs to the cytochrome f family. In terms of assembly, the 4 large subunits of the cytochrome b6-f complex are cytochrome b6, subunit IV (17 kDa polypeptide, petD), cytochrome f and the Rieske protein, while the 4 small subunits are PetG, PetL, PetM and PetN. The complex functions as a dimer. Requires heme as cofactor.

It is found in the plastid. Its subcellular location is the chloroplast thylakoid membrane. In terms of biological role, component of the cytochrome b6-f complex, which mediates electron transfer between photosystem II (PSII) and photosystem I (PSI), cyclic electron flow around PSI, and state transitions. The protein is Cytochrome f (petA) of Arabidopsis thaliana (Mouse-ear cress).